Consider the following 649-residue polypeptide: tRNA-guanine(15) transglycosylase (649 aa).

The Nucleophile role is filled by D88. 2 residues coordinate substrate: D123 and A194. Zn(2+) is bound by residues C280, C282, and C285. The 76-residue stretch at 572–647 (KYRVIVDKSV…VAVNIRGGLK (76 aa)) folds into the PUA domain.

This sequence belongs to the archaeosine tRNA-ribosyltransferase family. The cofactor is Zn(2+).

The enzyme catalyses guanosine(15) in tRNA + 7-cyano-7-deazaguanine = 7-cyano-7-carbaguanosine(15) in tRNA + guanine. It participates in tRNA modification; archaeosine-tRNA biosynthesis. Exchanges the guanine residue with 7-cyano-7-deazaguanine (preQ0) at position 15 in the dihydrouridine loop (D-loop) of archaeal tRNAs. This Methanococcus vannielii (strain ATCC 35089 / DSM 1224 / JCM 13029 / OCM 148 / SB) protein is tRNA-guanine(15) transglycosylase.